Consider the following 191-residue polypeptide: Cytochrome b-245 light chain (191 aa).

Residues 2-7 (GQIEWA) are Cytoplasmic-facing. Residues 8-30 (MWANEQALASGLILITGGIVATA) form a helical membrane-spanning segment. Topologically, residues 31–35 (GQFTQ) are extracellular. A helical membrane pass occupies residues 36 to 53 (WYLGAYSIAAGVLVCLLE). At 54-69 (YPRGKRSKGSTMERCG) the chain is on the cytoplasmic side. An intramembrane segment occupies 70–80 (QKYLTRVVKLF). Residues 81–86 (GPLTRN) are Cytoplasmic-facing. A helical membrane pass occupies residues 87-104 (YYIRAFLHLGLAVPAGFL). Leu105 is a topological domain (extracellular). Residues 106–126 (ATILGTACLAIASGIYLLAAI) form a helical membrane-spanning segment. Residues 127–191 (RGEQWSPIEP…NPMPVNDEVV (65 aa)) are Cytoplasmic-facing. A disordered region spans residues 134–191 (IEPKPKERPQIGGTIKQPPSNPPPRPPAEARKKLSEEAAGVPTGGPQENPMPVNDEVV). At Thr147 the chain carries Phosphothreonine. Lys149 participates in a covalent cross-link: Glycyl lysine isopeptide (Lys-Gly) (interchain with G-Cter in ubiquitin). Ser168 carries the phosphoserine modification.

This sequence belongs to the p22phox family. Component of the phagocyte NADPH oxidase core complex/cytochrome b558 complex, composed of CYBB (heavy chain (beta)) and CYBA (light chain (alpha)). Component of the phagocyte NADPH oxidase complex composed of an obligatory core heterodimer formed by the membrane proteins CYBA and CYBB and the cytosolic regulatory subunits NCF1/p47-phox, NCF2/p67-phox, NCF4/p40-phox and the small GTPase RAC1 or RAC2. Interacts with NCF1 (via SH3 domain). Interacts with SH3PXD2A. Interacts with DUOX1, DUOX2 and TPO. Interacts with NOX4; this interaction mediates superoxide generation. Interacts with calprotectin (S100A8/9). Interacts with GBP7. Interacts with NOXO1. Forms a heterodimer with NOX3 and is essential for activity and cell membrane localization of NOX3. Interacts with NOX1. Post-translationally, phosphorylation at Thr-147 enhances NADPH oxidase activity by promoting NCF1/p47-phox binding. Ubiquitinated at Lys-149 likely by RNF145.

The protein resides in the cell membrane. Subunit of NADPH oxidase complexes that is required for the NADPH oxidase activity that generates, in various cell types, superoxide from molecular oxygen utilizing NADPH as an electron donor. Subunit of the phagocyte NADPH oxidase complex that mediates the transfer of electrons from cytosolic NADPH to O2 to produce the superoxide anion (O2(-)). In the activated complex, electrons are first transferred from NADPH to flavin adenine dinucleotide (FAD) and subsequently transferred via two heme molecules to molecular oxygen, producing superoxide through an outer-sphere reaction. Activation of the NADPH oxidase complex is initiated by the assembly of cytosolic subunits of the NADPH oxidase complex with the core NADPH oxidase complex to form a complex at the plasma membrane or phagosomal membrane. This activation process is initiated by phosphorylation dependent binding of the cytosolic NCF1/p47-phox subunit to the C-terminus of CYBA/p22-phox. Aassociates with NOX3 to form a functional NADPH oxidase constitutively generating superoxide. This Bison bison (American bison) protein is Cytochrome b-245 light chain.